We begin with the raw amino-acid sequence, 70 residues long: UPF0270 protein VS_2853 (70 aa).

This sequence belongs to the UPF0270 family.

This is UPF0270 protein VS_2853 from Vibrio atlanticus (strain LGP32) (Vibrio splendidus (strain Mel32)).